Reading from the N-terminus, the 109-residue chain is Histidine-rich carboxyl terminus protein 1 (109 aa).

A helical membrane pass occupies residues 13–33; it reads WITGTALAFLMLLWLMALCLF. Positions 77-109 are disordered; it reads TSVGVHHHHHHSPHRLHHHKHHHRHHHAHGARR. The span at 81–109 shows a compositional bias: basic residues; sequence VHHHHHHSPHRLHHHKHHHRHHHAHGARR.

It is found in the membrane. This chain is Histidine-rich carboxyl terminus protein 1 (Hrct1), found in Mus musculus (Mouse).